Consider the following 254-residue polypeptide: Phosphoribosylaminoimidazole-succinocarboxamide synthase (254 aa).

This sequence belongs to the SAICAR synthetase family.

The enzyme catalyses 5-amino-1-(5-phospho-D-ribosyl)imidazole-4-carboxylate + L-aspartate + ATP = (2S)-2-[5-amino-1-(5-phospho-beta-D-ribosyl)imidazole-4-carboxamido]succinate + ADP + phosphate + 2 H(+). Its pathway is purine metabolism; IMP biosynthesis via de novo pathway; 5-amino-1-(5-phospho-D-ribosyl)imidazole-4-carboxamide from 5-amino-1-(5-phospho-D-ribosyl)imidazole-4-carboxylate: step 1/2. This chain is Phosphoribosylaminoimidazole-succinocarboxamide synthase, found in Sinorhizobium medicae (strain WSM419) (Ensifer medicae).